The following is a 555-amino-acid chain: Formate--tetrahydrofolate ligase (555 aa).

65–72 (TPAGEGKS) is an ATP binding site.

The protein belongs to the formate--tetrahydrofolate ligase family.

The enzyme catalyses (6S)-5,6,7,8-tetrahydrofolate + formate + ATP = (6R)-10-formyltetrahydrofolate + ADP + phosphate. It participates in one-carbon metabolism; tetrahydrofolate interconversion. This chain is Formate--tetrahydrofolate ligase, found in Staphylococcus epidermidis (strain ATCC 35984 / DSM 28319 / BCRC 17069 / CCUG 31568 / BM 3577 / RP62A).